Consider the following 316-residue polypeptide: NADH-cytochrome b5 reductase-like (316 aa).

One can recognise an Oxidoreductase-like domain in the interval 17-53 (KPVEPLPSQCCGSGCSPCVFDLYYRDLERWETARARN). An FAD-binding FR-type domain is found at 76–178 (ETFLAFHIST…RGPFGSFLYE (103 aa)). Residues 158–173 (ESWR…GPFG) and 183–215 (GELL…TFVT) each bind FAD.

Belongs to the flavoprotein pyridine nucleotide cytochrome reductase family. It depends on FAD as a cofactor.

It catalyses the reaction 2 Fe(III)-[cytochrome b5] + NADH = 2 Fe(II)-[cytochrome b5] + NAD(+) + H(+). Its function is as follows. NADH-cytochrome b5 reductases are involved in desaturation and elongation of fatty acids, cholesterol biosynthesis, drug metabolism, and, in erythrocyte, methemoglobin reduction. The protein is NADH-cytochrome b5 reductase-like (Cyb5rl) of Mus musculus (Mouse).